A 349-amino-acid chain; its full sequence is Ribosomal RNA small subunit methyltransferase C (349 aa).

This sequence belongs to the methyltransferase superfamily. RsmC family. In terms of assembly, monomer.

It is found in the cytoplasm. It carries out the reaction guanosine(1207) in 16S rRNA + S-adenosyl-L-methionine = N(2)-methylguanosine(1207) in 16S rRNA + S-adenosyl-L-homocysteine + H(+). Specifically methylates the guanine in position 1207 of 16S rRNA in the 30S particle. In Psychromonas ingrahamii (strain DSM 17664 / CCUG 51855 / 37), this protein is Ribosomal RNA small subunit methyltransferase C.